The following is a 145-amino-acid chain: Aminoglycoside N(6')-acetyltransferase type 1 (145 aa).

The region spanning 1–145 (MDIRQMNRTH…ERVIFYRKRC (145 aa)) is the N-acetyltransferase domain. Substrate is bound by residues Trp22, His25, Tyr66, and Glu79. Residues 81 to 83 (IFV) and 89 to 94 (QRGVAK) contribute to the acetyl-CoA site. Asp115 provides a ligand contact to substrate. Asn120 contacts acetyl-CoA. Residue Glu136 coordinates substrate.

As to quaternary structure, homodimer.

The enzyme catalyses kanamycin B + acetyl-CoA = N(6')-acetylkanamycin B + CoA + H(+). In terms of biological role, catalyzes the transfer of an acetyl group from acetyl-CoA to the 6'-amino group of aminoglycoside molecules conferring resistance to antibiotics containing the purpurosamine ring. The sequence is that of Aminoglycoside N(6')-acetyltransferase type 1 from Salmonella typhimurium (strain LT2 / SGSC1412 / ATCC 700720).